Reading from the N-terminus, the 622-residue chain is Sodium-coupled monocarboxylate transporter 1 (622 aa).

Over Met-1–Tyr-15 the chain is Extracellular. The chain crosses the membrane as a helical span at residues Leu-16–Gly-36. Residues Gly-37 to Ser-51 are Cytoplasmic-facing. A helical transmembrane segment spans residues Met-52 to Leu-72. Topologically, residues Gly-73 to Ala-83 are extracellular. The helical transmembrane segment at Met-84–Leu-104 threads the bilayer. Topologically, residues Pro-105–Arg-128 are cytoplasmic. The chain crosses the membrane as a helical span at residues Leu-129–Ala-149. Topologically, residues Pro-150–Asp-161 are extracellular. The helical transmembrane segment at Leu-162 to Leu-182 threads the bilayer. Over Lys-183–Ala-184 the chain is Cytoplasmic. The chain crosses the membrane as a helical span at residues Val-185–Ile-205. Over Arg-206–Thr-241 the chain is Extracellular. A glycan (N-linked (GlcNAc...) asparagine) is linked at Asn-219. Residues Phe-242 to Ala-262 form a helical membrane-spanning segment. Residues Gln-263–Asn-283 lie on the Cytoplasmic side of the membrane. Residues Leu-284–Ile-304 traverse the membrane as a helical segment. At Tyr-305–Gly-336 the chain is on the extracellular side. The helical transmembrane segment at Leu-337 to Ile-357 threads the bilayer. Residues Asn-358–Ser-389 lie on the Cytoplasmic side of the membrane. The chain crosses the membrane as a helical span at residues Leu-390 to Leu-410. At Gln-411–Ser-415 the chain is on the extracellular side. A helical membrane pass occupies residues Ile-416 to Phe-436. Residues Val-437–Asn-438 are Cytoplasmic-facing. A helical transmembrane segment spans residues Ser-439–Gly-459. Over Ser-460–Tyr-521 the chain is Extracellular. 2 N-linked (GlcNAc...) asparagine glycosylation sites follow: Asn-481 and Asn-488. The helical transmembrane segment at Leu-522–Leu-542 threads the bilayer. The Cytoplasmic segment spans residues Ser-543–Ala-622. The disordered stretch occupies residues Asp-591–Ala-622. Positions Glu-595–Thr-609 are enriched in polar residues.

Belongs to the sodium:solute symporter (SSF) (TC 2.A.21) family. In terms of tissue distribution, in the gastrula and neurula stages, expressed in the gastrula anterior endoderm and in the entire circumference of the blastopore lip superficial endoderm. At tailbud stages, abundant expression observed in the ventral midgut region. As development proceeds expression becomes restricted to the liver diverticulum and ultimately to the presumptive gallbladder, by tadpole stage 35. Also present in pronephros and the tip of the tail.

It localises to the apical cell membrane. The catalysed reaction is (S)-lactate(out) + 2 Na(+)(out) = (S)-lactate(in) + 2 Na(+)(in). The enzyme catalyses propanoate(out) + 2 Na(+)(out) = propanoate(in) + 2 Na(+)(in). It catalyses the reaction pyruvate(out) + 2 Na(+)(out) = pyruvate(in) + 2 Na(+)(in). It carries out the reaction acetate(out) + 2 Na(+)(out) = acetate(in) + 2 Na(+)(in). The catalysed reaction is butanoate(out) + 2 Na(+)(out) = butanoate(in) + 2 Na(+)(in). The enzyme catalyses nicotinate(out) + 2 Na(+)(out) = nicotinate(in) + 2 Na(+)(in). It catalyses the reaction (R)-3-hydroxybutanoate(out) + 2 Na(+)(out) = (R)-3-hydroxybutanoate(in) + 2 Na(+)(in). It carries out the reaction acetoacetate(out) + 2 Na(+)(out) = acetoacetate(in) + 2 Na(+)(in). The catalysed reaction is 4-methyl-2-oxopentanoate(out) + 2 Na(+)(out) = 4-methyl-2-oxopentanoate(in) + 2 Na(+)(in). The enzyme catalyses 5-oxo-L-proline(out) + 2 Na(+)(out) = 5-oxo-L-proline(in) + 2 Na(+)(in). It catalyses the reaction iodide(out) = iodide(in). It carries out the reaction chloride(in) = chloride(out). The catalysed reaction is nitrate(in) = nitrate(out). The enzyme catalyses bromide(in) = bromide(out). Acts as an electrogenic sodium (Na(+)) and chloride (Cl-)-dependent sodium-coupled solute transporter, including transport of monocarboxylates (short-chain fatty acids including L-lactate, D-lactate, pyruvate, acetate, propionate, valerate and butyrate), mocarboxylate drugs (nicotinate, benzoate, salicylate and 5-aminosalicylate) and ketone bodies (beta-D-hydroxybutyrate, acetoacetate and alpha-ketoisocaproate), with a Na(+):substrate stoichiometry of between 4:1 and 2:1. Catalyzes passive carrier mediated diffusion of iodide. Mediates iodide transport from the thyrocyte into the colloid lumen through the apical membrane. Mediates sodium-coupled electrogenic transport of pyroglutamate (5-oxo-L-proline). Can mediate the transport of chloride, bromide, iodide and nitrate ions when external concentration of sodium ions is reduced. In Xenopus laevis (African clawed frog), this protein is Sodium-coupled monocarboxylate transporter 1.